We begin with the raw amino-acid sequence, 278 residues long: Release factor glutamine methyltransferase (278 aa).

S-adenosyl-L-methionine-binding positions include glycine 117–glycine 121, aspartate 140, and asparagine 184. Position 184–187 (asparagine 184–tyrosine 187) interacts with substrate.

The protein belongs to the protein N5-glutamine methyltransferase family. PrmC subfamily.

The catalysed reaction is L-glutaminyl-[peptide chain release factor] + S-adenosyl-L-methionine = N(5)-methyl-L-glutaminyl-[peptide chain release factor] + S-adenosyl-L-homocysteine + H(+). Its function is as follows. Methylates the class 1 translation termination release factors RF1/PrfA and RF2/PrfB on the glutamine residue of the universally conserved GGQ motif. The polypeptide is Release factor glutamine methyltransferase (Staphylococcus aureus (strain NCTC 8325 / PS 47)).